Reading from the N-terminus, the 619-residue chain is Dihydroxy-acid dehydratase (619 aa).

D81 is a binding site for Mg(2+). A [2Fe-2S] cluster-binding site is contributed by C122. The Mg(2+) site is built by D123 and K124. K124 is subject to N6-carboxylysine. Residue C195 participates in [2Fe-2S] cluster binding. Position 491 (E491) interacts with Mg(2+). S517 (proton acceptor) is an active-site residue.

The protein belongs to the IlvD/Edd family. As to quaternary structure, homodimer. [2Fe-2S] cluster serves as cofactor. Mg(2+) is required as a cofactor.

The enzyme catalyses (2R)-2,3-dihydroxy-3-methylbutanoate = 3-methyl-2-oxobutanoate + H2O. It catalyses the reaction (2R,3R)-2,3-dihydroxy-3-methylpentanoate = (S)-3-methyl-2-oxopentanoate + H2O. It participates in amino-acid biosynthesis; L-isoleucine biosynthesis; L-isoleucine from 2-oxobutanoate: step 3/4. The protein operates within amino-acid biosynthesis; L-valine biosynthesis; L-valine from pyruvate: step 3/4. Functions in the biosynthesis of branched-chain amino acids. Catalyzes the dehydration of (2R,3R)-2,3-dihydroxy-3-methylpentanoate (2,3-dihydroxy-3-methylvalerate) into 2-oxo-3-methylpentanoate (2-oxo-3-methylvalerate) and of (2R)-2,3-dihydroxy-3-methylbutanoate (2,3-dihydroxyisovalerate) into 2-oxo-3-methylbutanoate (2-oxoisovalerate), the penultimate precursor to L-isoleucine and L-valine, respectively. The sequence is that of Dihydroxy-acid dehydratase from Sphingopyxis alaskensis (strain DSM 13593 / LMG 18877 / RB2256) (Sphingomonas alaskensis).